A 73-amino-acid chain; its full sequence is DNA-directed RNA polymerase subunit omega (73 aa).

It belongs to the RNA polymerase subunit omega family. As to quaternary structure, in cyanobacteria the RNAP catalytic core is composed of 2 alpha, 1 beta, 1 beta', 1 gamma and 1 omega subunit. When a sigma factor is associated with the core the holoenzyme is formed, which can initiate transcription.

It catalyses the reaction RNA(n) + a ribonucleoside 5'-triphosphate = RNA(n+1) + diphosphate. In terms of biological role, promotes RNA polymerase assembly. Latches the N- and C-terminal regions of the beta' subunit thereby facilitating its interaction with the beta and alpha subunits. The protein is DNA-directed RNA polymerase subunit omega of Gloeobacter violaceus (strain ATCC 29082 / PCC 7421).